Reading from the N-terminus, the 220-residue chain is GTP-binding protein YPT53 (220 aa).

Residues 19 to 26, 67 to 71, and 125 to 128 contribute to the GTP site; these read GESAVGKS, DTAGQ, and NKMD. 2 S-geranylgeranyl cysteine lipidation sites follow: cysteine 218 and cysteine 220. Position 220 is a cysteine methyl ester (cysteine 220).

Belongs to the small GTPase superfamily. Rab family.

It localises to the cell membrane. Required for transport in the endocytic pathway and for correct sorting of the vacuolar hydrolases suggesting a possible intersection of the endocytic with the vacuolar sorting pathway. May be involved in recruiting the MON1-CCZ1 complex to membranes enriched in phosphatidylinositol 3-phosphate (PtdIns[3]P) or other charged lipids, leading to recruitment of YPT7. The sequence is that of GTP-binding protein YPT53 (YPT53) from Saccharomyces cerevisiae (strain ATCC 204508 / S288c) (Baker's yeast).